The chain runs to 201 residues: MTDQGENEKKQRRSNATIAVACLSFFVCMIGAAYASVPLYRIFCQVTGYGGTTQRVEQYSDTILDKTIKVRFDANIANGLPWDFKPMQREVTVRIGETTMIKYEAHNLFGEETYGRASFNVAPGRAGAYFNKVECFCFTDNTLKPGEDLELPVVFFVDPEFVNDPDLKDVKTITLSYTFFPIDKPKPVVNAKAVGSTRNGG.

Residues 1–13 lie on the Cytoplasmic side of the membrane; it reads MTDQGENEKKQRR. A helical; Signal-anchor for type II membrane protein transmembrane segment spans residues 14 to 36; the sequence is SNATIAVACLSFFVCMIGAAYAS. Topologically, residues 37–201 are periplasmic; the sequence is VPLYRIFCQV…KAVGSTRNGG (165 aa).

This sequence belongs to the COX11/CtaG family.

It is found in the cell inner membrane. Its function is as follows. Exerts its effect at some terminal stage of cytochrome c oxidase synthesis, probably by being involved in the insertion of the copper B into subunit I. The protein is Cytochrome c oxidase assembly protein CtaG of Brucella suis (strain ATCC 23445 / NCTC 10510).